A 130-amino-acid chain; its full sequence is Probable 4-amino-4-deoxy-L-arabinose-phosphoundecaprenol flippase subunit ArnF (130 aa).

Over 1-4 the chain is Cytoplasmic; it reads MRGY. A helical membrane pass occupies residues 5–25; sequence AWGAASVLLVTLAQLLMKWGM. The Periplasmic portion of the chain corresponds to 26 to 47; it reads AQIPLMSFADVTLNLFMQYWLP. Residues 48–68 traverse the membrane as a helical segment; the sequence is LVVVSGGIFGYALSMLCWFFA. Over 69–77 the chain is Cytoplasmic; the sequence is LHHLPLNRA. Residues 78–98 traverse the membrane as a helical segment; the sequence is YPLLSVSYALVYLAAVILPWF. Position 99 (Asn-99) is a topological domain, periplasmic. The chain crosses the membrane as a helical span at residues 100–120; it reads ESATLLKTLGTLFILFGVWLI. Residues 121–130 lie on the Cytoplasmic side of the membrane; that stretch reads NSQAKVKTPQ.

Belongs to the ArnF family. Heterodimer of ArnE and ArnF.

Its subcellular location is the cell inner membrane. Its pathway is bacterial outer membrane biogenesis; lipopolysaccharide biosynthesis. Its function is as follows. Translocates 4-amino-4-deoxy-L-arabinose-phosphoundecaprenol (alpha-L-Ara4N-phosphoundecaprenol) from the cytoplasmic to the periplasmic side of the inner membrane. The polypeptide is Probable 4-amino-4-deoxy-L-arabinose-phosphoundecaprenol flippase subunit ArnF (Serratia proteamaculans (strain 568)).